The following is an 896-amino-acid chain: NEDD4-binding protein 1 (896 aa).

The 85-residue stretch at 59-143 (QEAVHSAKEY…IQQFVKLFEN (85 aa)) folds into the KH-like domain. At Ser-226 the chain carries Phosphoserine. Phosphothreonine is present on Thr-242. 2 positions are modified to phosphoserine: Ser-258 and Ser-300. Disordered regions lie at residues 403 to 430 (YPET…PKKT) and 488 to 507 (ETDG…VNFV). The span at 414–430 (VYSSTNELTTDSTPKKT) shows a compositional bias: polar residues. Residue Ser-562 is modified to Phosphoserine. One can recognise an RNase NYN domain in the interval 617-769 (LKHIVIDGSN…LGRSGPRLEE (153 aa)). The interval 801–821 (GTQAASTSHQPPTRIQGAPSS) is disordered. A compositionally biased stretch (polar residues) spans 803 to 813 (QAASTSHQPPT). Residues 849–896 (RSSAETNELREALLKIFPDSEQRLKIDQILVAHPYMKDLNALSAMVLD) are coCUN.

This sequence belongs to the N4BP1 family. As to quaternary structure, interacts with NEDD4. Interacts with ITCH (via WW domain 2). In terms of processing, proteolytically cleaved by CASP8 downstream of TLR3 or TLR4, leading to its inactivation. Mainly cleaved at Asp-490 by CASP8. Cleaved by caspase-like protein MALT1 in T-cells following TCR-mediated activation, leading to its inactivation and subsequent viral reactivation during HIV-1 infection. Mono- and polyubiquitinated on the CoCUN region. Monoubiquitinated by NEDD4. Polyubiquitinated, leading to its degradation by the proteasome. Sumoylated with SUMO1, abrogating polyubiquitination and subsequent degradation. Desumoylated by SENP1, leading to accumulation in PML nuclear bodies. Detected in heart, lung, brain, liver, skeletal muscle, pancreas, kidney, spleen, testis and ovary.

It localises to the cytoplasm. The protein resides in the cytosol. It is found in the nucleus. Its subcellular location is the nucleolus. The protein localises to the PML body. Its activity is regulated as follows. Proteolytic cleavage by CASP8 or MALT1 leads to its inactivation. Potent suppressor of cytokine production that acts as a regulator of innate immune signaling and inflammation. Acts as a key negative regulator of select cytokine and chemokine responses elicited by TRIF-independent Toll-like receptors (TLRs), thereby limiting inflammatory cytokine responses to minor insults. In response to more threatening pathogens, cleaved by CASP8 downstream of TLR3 or TLR4, leading to its inactivation, thereby allowing production of inflammatory cytokines. Acts as a restriction factor against some viruses, such as HIV-1: restricts HIV-1 replication by binding to HIV-1 mRNAs and mediating their degradation via its ribonuclease activity. Also acts as an inhibitor of the E3 ubiquitin-protein ligase ITCH: acts by interacting with the second WW domain of ITCH, leading to compete with ITCH's substrates and impairing ubiquitination of substrates. The sequence is that of NEDD4-binding protein 1 from Homo sapiens (Human).